Consider the following 121-residue polypeptide: Large ribosomal subunit protein uL18 (121 aa).

This sequence belongs to the universal ribosomal protein uL18 family. As to quaternary structure, part of the 50S ribosomal subunit; part of the 5S rRNA/L5/L18/L25 subcomplex. Contacts the 5S and 23S rRNAs.

In terms of biological role, this is one of the proteins that bind and probably mediate the attachment of the 5S RNA into the large ribosomal subunit, where it forms part of the central protuberance. The chain is Large ribosomal subunit protein uL18 from Streptococcus thermophilus (strain CNRZ 1066).